The sequence spans 346 residues: Enkurin domain-containing protein 1 (346 aa).

Disordered regions lie at residues methionine 1–arginine 24, serine 88–arginine 107, and arginine 113–alanine 132. Serine 91 carries the post-translational modification Phosphoserine. Composition is skewed to basic and acidic residues over residues lysine 98–arginine 107 and arginine 113–glycine 125. Serine 136 carries the phosphoserine modification. Residues glutamate 251–lysine 343 form the Enkurin domain. The tract at residues glutamate 259–proline 280 is disordered.

As to quaternary structure, interacts with alpha-tubulin. Interacts (via central region) with CCP110 (via N-terminal region); competes with CEP97 for binding to CCP110. Widely expressed with highest levels in testis and lung.

Its subcellular location is the cytoplasm. The protein localises to the cytoskeleton. It localises to the microtubule organizing center. The protein resides in the centrosome. It is found in the centriole. Its subcellular location is the cilium basal body. The protein localises to the cell projection. It localises to the cilium. The protein resides in the spindle. It is found in the spindle pole. Its subcellular location is the cilium axoneme. Its function is as follows. Microtubule-binding protein which regulates microtubule organization and stability. Promotes the stability of astral microtubules and facilitates the proper orientation of the mitotic spindle. This allows the oriented division of basal keratinocytes and contributes to epidermal stratification. Required for the assembly of both primary and motile cilia. Destabilizes the interaction between CCP110 and CEP97 by competing with CEP97 for binding to CCP110 which promotes the removal of CCP110 and CEP97 from the mother centriole and allows the initiation of ciliogenesis. In Mus musculus (Mouse), this protein is Enkurin domain-containing protein 1 (Enkd1).